The sequence spans 536 residues: Glutamyl-tRNA(Gln) amidotransferase subunit B, mitochondrial (536 aa).

The protein belongs to the GatB/GatE family. GatB subfamily. As to quaternary structure, subunit of the heterotrimeric GatFAB amidotransferase (AdT) complex, composed of A, B and F subunits.

The protein localises to the mitochondrion. It carries out the reaction L-glutamyl-tRNA(Gln) + L-glutamine + ATP + H2O = L-glutaminyl-tRNA(Gln) + L-glutamate + ADP + phosphate + H(+). Functionally, allows the formation of correctly charged Gln-tRNA(Gln) through the transamidation of misacylated Glu-tRNA(Gln) in the mitochondria. The reaction takes place in the presence of glutamine and ATP through an activated gamma-phospho-Glu-tRNA(Gln). The polypeptide is Glutamyl-tRNA(Gln) amidotransferase subunit B, mitochondrial (Vanderwaltozyma polyspora (strain ATCC 22028 / DSM 70294 / BCRC 21397 / CBS 2163 / NBRC 10782 / NRRL Y-8283 / UCD 57-17) (Kluyveromyces polysporus)).